The chain runs to 385 residues: uncharacterized protein (385 aa).

This sequence belongs to the phage portal family. HK97 subfamily.

This is an uncharacterized protein from Rickettsia felis (strain ATCC VR-1525 / URRWXCal2) (Rickettsia azadi).